We begin with the raw amino-acid sequence, 142 residues long: Hemoglobin subunit alpha (142 aa).

The residue at position 1 (S1) is an N-acetylserine. The Globin domain occupies 1–142 (SLSEKNKAAV…VALALADRYR (142 aa)). Residue H59 participates in O2 binding. H88 serves as a coordination point for heme b.

The protein belongs to the globin family. Heterotetramer of two alpha chains and two beta chains. In terms of tissue distribution, red blood cells.

Involved in oxygen transport from gills to the various peripheral tissues. The protein is Hemoglobin subunit alpha (hba) of Pagothenia borchgrevinki (Bald rockcod).